The primary structure comprises 281 residues: 2-dehydro-3-deoxyphosphooctonate aldolase (281 aa).

It belongs to the KdsA family.

It is found in the cytoplasm. The catalysed reaction is D-arabinose 5-phosphate + phosphoenolpyruvate + H2O = 3-deoxy-alpha-D-manno-2-octulosonate-8-phosphate + phosphate. It functions in the pathway carbohydrate biosynthesis; 3-deoxy-D-manno-octulosonate biosynthesis; 3-deoxy-D-manno-octulosonate from D-ribulose 5-phosphate: step 2/3. The protein operates within bacterial outer membrane biogenesis; lipopolysaccharide biosynthesis. The protein is 2-dehydro-3-deoxyphosphooctonate aldolase of Janthinobacterium sp. (strain Marseille) (Minibacterium massiliensis).